Consider the following 305-residue polypeptide: tRNA dimethylallyltransferase (305 aa).

An ATP-binding site is contributed by 9–16; that stretch reads GPTASGKT. Residue 11-16 participates in substrate binding; the sequence is TASGKT. Interaction with substrate tRNA regions lie at residues 34–37, 158–162, and 239–244; these read DSAL, QRLSR, and RCVGYR.

The protein belongs to the IPP transferase family. Monomer. Requires Mg(2+) as cofactor.

The catalysed reaction is adenosine(37) in tRNA + dimethylallyl diphosphate = N(6)-dimethylallyladenosine(37) in tRNA + diphosphate. Its function is as follows. Catalyzes the transfer of a dimethylallyl group onto the adenine at position 37 in tRNAs that read codons beginning with uridine, leading to the formation of N6-(dimethylallyl)adenosine (i(6)A). This Aeromonas hydrophila subsp. hydrophila (strain ATCC 7966 / DSM 30187 / BCRC 13018 / CCUG 14551 / JCM 1027 / KCTC 2358 / NCIMB 9240 / NCTC 8049) protein is tRNA dimethylallyltransferase.